The following is a 310-amino-acid chain: Putative S-adenosyl-L-methionine-dependent methyltransferase MUL_4763 (310 aa).

Residues Asp-137 and 166 to 167 each bind S-adenosyl-L-methionine; that span reads DL.

The protein belongs to the UPF0677 family.

Functionally, exhibits S-adenosyl-L-methionine-dependent methyltransferase activity. The polypeptide is Putative S-adenosyl-L-methionine-dependent methyltransferase MUL_4763 (Mycobacterium ulcerans (strain Agy99)).